Consider the following 55-residue polypeptide: Eclosion hormone (55 aa).

The protein belongs to the insect eclosion hormone family.

The protein localises to the secreted. Functionally, neuropeptide that triggers the performance of ecdysis behaviors at the end of a molt. It triggers adult behavior patterns: larval, pupal and adult ecdysis, and plasticization during the molt. The protein is Eclosion hormone of Romalea microptera (Eastern lubber grasshopper).